Reading from the N-terminus, the 178-residue chain is Cytochrome b6-f complex iron-sulfur subunit (178 aa).

The chain crosses the membrane as a helical span at residues 20–42; the sequence is LLTFGTATGVALGALYPVANYFM. The Rieske domain maps to 65–161; it reads KTGWLATHQA…VDIEDDAVLV (97 aa). 4 residues coordinate [2Fe-2S] cluster: C107, H109, C125, and H128. Residues C112 and C127 are joined by a disulfide bond.

The protein belongs to the Rieske iron-sulfur protein family. As to quaternary structure, the 4 large subunits of the cytochrome b6-f complex are cytochrome b6, subunit IV (17 kDa polypeptide, PetD), cytochrome f and the Rieske protein, while the 4 small subunits are PetG, PetL, PetM and PetN. The complex functions as a dimer. [2Fe-2S] cluster is required as a cofactor.

It is found in the cellular thylakoid membrane. The enzyme catalyses 2 oxidized [plastocyanin] + a plastoquinol + 2 H(+)(in) = 2 reduced [plastocyanin] + a plastoquinone + 4 H(+)(out). Its function is as follows. Component of the cytochrome b6-f complex, which mediates electron transfer between photosystem II (PSII) and photosystem I (PSI), cyclic electron flow around PSI, and state transitions. The polypeptide is Cytochrome b6-f complex iron-sulfur subunit (Prochlorococcus marinus (strain MIT 9215)).